Here is a 603-residue protein sequence, read N- to C-terminus: NADH-ubiquinone oxidoreductase chain 5 (603 aa).

16 consecutive transmembrane segments (helical) span residues 4–24 (YTTMAILTLTSLIPPITATLI), 36–56 (VKMTIASTFMISLFPTMMFMC), 87–107 (MMFIPIALFVTWSIMEFSLWY), 114–134 (INQFFKYLLIFLTTMLILVTA), 137–157 (LFQLFIGWEGVGIMSFLLIGW), 171–191 (AILYNRIGDIGFILALAWFLL), 200–220 (QMILLNSNPNFLPLAGLLLAA), 241–261 (TPVSALLHSSTMVVAGVFLLI), 272–292 (LIQTLTLCLGAITTLFTAICA), 301–320 (IVAFSTSSQLGLMVVTIGIN), 325–347 (AFLHICTHAFFKAMLFMCSGSII), 366–386 (LPLTSTSLTIGSLALTGMPFL), 407–429 (WALSTTLIATSLTSAYSTRMILL), 457–477 (LTIGSLLAGFLIINSIPPTSP), 482–502 (IPLYLKLTALSITLLGFLTAF), and 583–603 (MIKLYSLSLLIPLSLTLLLIM).

This sequence belongs to the complex I subunit 5 family. As to quaternary structure, core subunit of respiratory chain NADH dehydrogenase (Complex I) which is composed of 45 different subunits.

It is found in the mitochondrion inner membrane. It carries out the reaction a ubiquinone + NADH + 5 H(+)(in) = a ubiquinol + NAD(+) + 4 H(+)(out). Functionally, core subunit of the mitochondrial membrane respiratory chain NADH dehydrogenase (Complex I) which catalyzes electron transfer from NADH through the respiratory chain, using ubiquinone as an electron acceptor. Essential for the catalytic activity and assembly of complex I. The sequence is that of NADH-ubiquinone oxidoreductase chain 5 (MT-ND5) from Hylobates lar (Lar gibbon).